Here is an 887-residue protein sequence, read N- to C-terminus: Bifunctional uridylyltransferase/uridylyl-removing enzyme (887 aa).

Positions 1-337 are uridylyltransferase; sequence MINTSPLLNY…RLPNYERKIE (337 aa). The tract at residues 339-699 is uridylyl-removing; sequence VNDHFKIVDN…AHRKAAQDAV (361 aa). In terms of domain architecture, HD spans 457–579; the sequence is VDAHTLLLLR…LGDMEHLDYL (123 aa). ACT domains lie at 700-782 and 809-887; these read QIFI…LMQR and MVEI…ICQH.

It belongs to the GlnD family. Mg(2+) serves as cofactor.

It carries out the reaction [protein-PII]-L-tyrosine + UTP = [protein-PII]-uridylyl-L-tyrosine + diphosphate. The enzyme catalyses [protein-PII]-uridylyl-L-tyrosine + H2O = [protein-PII]-L-tyrosine + UMP + H(+). Uridylyltransferase (UTase) activity is inhibited by glutamine, while glutamine activates uridylyl-removing (UR) activity. Functionally, modifies, by uridylylation and deuridylylation, the PII regulatory proteins (GlnB and homologs), in response to the nitrogen status of the cell that GlnD senses through the glutamine level. Under low glutamine levels, catalyzes the conversion of the PII proteins and UTP to PII-UMP and PPi, while under higher glutamine levels, GlnD hydrolyzes PII-UMP to PII and UMP (deuridylylation). Thus, controls uridylylation state and activity of the PII proteins, and plays an important role in the regulation of nitrogen assimilation and metabolism. The polypeptide is Bifunctional uridylyltransferase/uridylyl-removing enzyme (Acinetobacter baumannii (strain ACICU)).